Consider the following 118-residue polypeptide: cAMP-responsive element-binding protein-like 2 (118 aa).

A disordered region spans residues 1–25 (MDDSKVSGGKVKKPGKRGRKPAKID). The segment covering 10 to 21 (KVKKPGKRGRKP) has biased composition (basic residues). One can recognise a bZIP domain in the interval 23-86 (KIDLKAKLER…AAMDQGKIPS (64 aa)). The segment at 29-60 (KLERSRQSARECRARKKLRYQYLEELVSSRER) is basic motif. Residues 62-69 (ICALREEL) form a leucine-zipper region.

It belongs to the bZIP family. ATF subfamily.

It localises to the nucleus. In terms of biological role, probable regulator of creb1 transcriptional activity which is involved in adipose cells differentiation. May also play a regulatory role in the cell cycle. This Xenopus tropicalis (Western clawed frog) protein is cAMP-responsive element-binding protein-like 2 (crebl2).